A 255-amino-acid polypeptide reads, in one-letter code: Sushi domain-containing protein 3 (255 aa).

The disordered stretch occupies residues 1–25 (MRWAAATLRGKARPRGRAGVTTPAP). Topologically, residues 1 to 103 (MRWAAATLRG…VPPHETFGFK (103 aa)) are extracellular. An N-linked (GlcNAc...) asparagine glycan is attached at N27. Residues 30-93 (GTCAKLRLPP…WSSGSPVCKL (64 aa)) form the Sushi domain. Cystine bridges form between C32–C75 and C61–C91. A helical transmembrane segment spans residues 104-124 (VAVIASIVSCAIILLMSMAFL). The Cytoplasmic segment spans residues 125–255 (TCCLLKCVKK…PQQPAAYALG (131 aa)). Residues 173 to 255 (SGPSQAHDNH…PQQPAAYALG (83 aa)) form a disordered region. The span at 179 to 191 (HDNHSFTTDHGES) shows a compositional bias: basic and acidic residues.

As to expression, highly expressed in estrogen receptor-positive breast tumors.

It localises to the cell membrane. In terms of biological role, may play a role in breast tumorigenesis by promoting estrogen-dependent cell proliferation, cell-cell interactions and migration. The chain is Sushi domain-containing protein 3 (SUSD3) from Homo sapiens (Human).